We begin with the raw amino-acid sequence, 258 residues long: uncharacterized protein (258 aa).

The N-terminal stretch at 1–19 (MVGILPLCCSGCVPSLCCS) is a signal peptide. Helical transmembrane passes span 94–114 (GLLL…NWTG), 197–217 (CLIL…LPYI), and 219–239 (PGLS…SSLV).

It is found in the membrane. This is an uncharacterized protein from Homo sapiens (Human).